Here is a 71-residue protein sequence, read N- to C-terminus: Palustrin-2AJ2 (71 aa).

The N-terminal stretch at 1–22 (MFTLKKPLLVLLFLGTVSLSLC) is a signal peptide. Positions 23–40 (EQERAADDDEGEVIEEEV) are excised as a propeptide. Cysteines 65 and 71 form a disulfide.

In terms of tissue distribution, expressed by the skin glands.

Its subcellular location is the secreted. Functionally, displays broad-spectrum antibacterial activity against a range of Gram-positive and Gram-negative bacteria. Has low hemolytic activity, low cytotoxicity and low antioxidant activity. The polypeptide is Palustrin-2AJ2 (Amolops jingdongensis (Chinese torrent frog)).